The chain runs to 158 residues: SsrA-binding protein (158 aa).

The protein belongs to the SmpB family.

The protein localises to the cytoplasm. Required for rescue of stalled ribosomes mediated by trans-translation. Binds to transfer-messenger RNA (tmRNA), required for stable association of tmRNA with ribosomes. tmRNA and SmpB together mimic tRNA shape, replacing the anticodon stem-loop with SmpB. tmRNA is encoded by the ssrA gene; the 2 termini fold to resemble tRNA(Ala) and it encodes a 'tag peptide', a short internal open reading frame. During trans-translation Ala-aminoacylated tmRNA acts like a tRNA, entering the A-site of stalled ribosomes, displacing the stalled mRNA. The ribosome then switches to translate the ORF on the tmRNA; the nascent peptide is terminated with the 'tag peptide' encoded by the tmRNA and targeted for degradation. The ribosome is freed to recommence translation, which seems to be the essential function of trans-translation. This is SsrA-binding protein from Symbiobacterium thermophilum (strain DSM 24528 / JCM 14929 / IAM 14863 / T).